The following is a 756-amino-acid chain: 5-methyltetrahydropteroyltriglutamate--homocysteine methyltransferase (756 aa).

5-methyltetrahydropteroyltri-L-glutamate is bound by residues 20 to 23 (RELK) and Lys-114. L-homocysteine is bound by residues 433–435 (IGS) and Glu-486. Residues 433-435 (IGS) and Glu-486 each bind L-methionine. 5-methyltetrahydropteroyltri-L-glutamate is bound by residues 517 to 518 (RC) and Trp-563. Asp-601 provides a ligand contact to L-homocysteine. Asp-601 serves as a coordination point for L-methionine. Glu-607 contributes to the 5-methyltetrahydropteroyltri-L-glutamate binding site. Residues His-643, Cys-645, and Glu-667 each coordinate Zn(2+). The active-site Proton donor is the His-696. Cys-728 contacts Zn(2+).

Belongs to the vitamin-B12 independent methionine synthase family. It depends on Zn(2+) as a cofactor.

The enzyme catalyses 5-methyltetrahydropteroyltri-L-glutamate + L-homocysteine = tetrahydropteroyltri-L-glutamate + L-methionine. The protein operates within amino-acid biosynthesis; L-methionine biosynthesis via de novo pathway; L-methionine from L-homocysteine (MetE route): step 1/1. Its function is as follows. Catalyzes the transfer of a methyl group from 5-methyltetrahydrofolate to homocysteine resulting in methionine formation. The protein is 5-methyltetrahydropteroyltriglutamate--homocysteine methyltransferase of Mycolicibacterium paratuberculosis (strain ATCC BAA-968 / K-10) (Mycobacterium paratuberculosis).